The sequence spans 746 residues: tRNA (cytosine(34)-C(5))-methyltransferase (746 aa).

The disordered stretch occupies residues 1–30; the sequence is MGRNQKQNFFAARKRQKRENGPKRTDRQAQ. Residues 18-30 are compositionally biased toward basic and acidic residues; sequence RENGPKRTDRQAQ. S-adenosyl-L-methionine contacts are provided by residues 184–190, D216, D243, and D270; that span reads CAAPGSK. Residue C323 is the Nucleophile of the active site. 2 disordered regions span residues 454-475 and 701-746; these read QPAAEPQVDADGKPIEEKSVPW and SAEA…VATS. Positions 463 to 472 are enriched in basic and acidic residues; sequence ADGKPIEEKS. The segment covering 704–714 has biased composition (acidic residues); that stretch reads AEADSSGDGDA. Residues 731-746 show a composition bias toward polar residues; sequence AETTGTPMDTEVVATS.

Belongs to the class I-like SAM-binding methyltransferase superfamily. RsmB/NOP family. TRM4 subfamily. In terms of tissue distribution, ubiquitously expressed during embryonic development. Some enrichment is observed in the proventriculus area of the foregut and in the hindgut.

The protein localises to the nucleus. The protein resides in the nucleolus. The catalysed reaction is cytidine(34) in tRNA precursor + S-adenosyl-L-methionine = 5-methylcytidine(34) in tRNA precursor + S-adenosyl-L-homocysteine + H(+). Its function is as follows. RNA methyltransferase that methylates tRNAs. Methylates cytosine to 5-methylcytosine (m5C) at position 34 of intron-containing tRNA(Leu)(CAA) precursors. Required for short-term memory. The protein is tRNA (cytosine(34)-C(5))-methyltransferase of Drosophila melanogaster (Fruit fly).